The chain runs to 598 residues: Ecto-NOX disulfide-thiol exchanger 2 (598 aa).

The 80-residue stretch at 99–178 (KTVFVGGLPE…GRLHVDFAQA (80 aa)) folds into the RRM domain. Coiled-coil stretches lie at residues 264-299 (IQSA…LSGI) and 352-476 (RREE…KQEN).

Belongs to the ENOX family. It depends on Cu cation as a cofactor. In terms of processing, glycosylated.

It localises to the cell membrane. The protein resides in the secreted. Its subcellular location is the extracellular space. Its activity is regulated as follows. Inhibited by the antitumor sulfonylurea LY181984, the vabilloid capsaicin, and retinoids. May be involved in cell growth. Probably acts as a terminal oxidase of plasma electron transport from cytosolic NAD(P)H via hydroquinones to acceptors at the cell surface. Hydroquinone oxidase activity alternates with a protein disulfide-thiol interchange/oxidoreductase activity which may control physical membrane displacements associated with vesicle budding or cell enlargement. The activities oscillate with a period length of 22 minutes and play a role in control of the ultradian cellular biological clock. This chain is Ecto-NOX disulfide-thiol exchanger 2 (Enox2), found in Mus musculus (Mouse).